The chain runs to 235 residues: Serine/arginine-rich splicing factor 7 (235 aa).

Positions 11–84 (TKVYVGNLGT…SRVRVELSTG (74 aa)) constitute an RRM domain. Lysine 24 carries the N6-acetyllysine; alternate modification. Lysine 24 participates in a covalent cross-link: Glycyl lysine isopeptide (Lys-Gly) (interchain with G-Cter in SUMO2); alternate. Serine 32 carries the phosphoserine modification. The interval 81–98 (LSTGMPRRSRFDRPPARR) is sufficient for interaction with NXF1. A CCHC-type zinc finger spans residues 104-120 (DRCYECGEKGHYAYDCH). Residues 123–180 (SRRRRSRSRSRSHSRSRGRRYSRSRSRSRGRRSRSASPRRSRSVSLRRSRSASLRRSR) are compositionally biased toward basic residues. Residues 123–235 (SRRRRSRSRS…RRSASPERVD (113 aa)) form a disordered region. A run of 4 repeats spans residues 153–160 (RRSRSASP), 161–168 (RRSRSVSL), 169–176 (RRSRSASL), and 177–184 (RRSRSGSI). The segment at 153–223 (RRSRSASPRR…SPKRSRSPSG (71 aa)) is 6 X 8 AA repeats of R-R-S-R-S-X-S-X. Serine 163, serine 165, and serine 167 each carry phosphoserine. Phosphoserine occurs at positions 181, 183, 189, 191, and 193. Residues 187-219 (SRSRSRSRSRSRSLSRPRSSRSKSRSPSPKRSR) show a composition bias toward basic residues. A 5; approximate repeat occupies 208 to 215 (SKSRSPSP). Residues 216-223 (KRSRSPSG) form a 6; approximate repeat. A phosphoserine mark is found at serine 228 and serine 230.

Belongs to the splicing factor SR family. Found in large molecular weight complexes containing CCNL1 and the p110 isoforms of either CDC2L1 or CDC2L2. Interacts with CCNL2 and CPSF6. Interacts with NXF1. Interacts with YTHDC1. Extensively phosphorylated on serine residues in the RS domain.

The protein resides in the nucleus. It localises to the cytoplasm. Functionally, required for pre-mRNA splicing. Represses the splicing of MAPT/Tau exon 10. May function as export adapter involved in mRNA nuclear export such as of histone H2A. Binds mRNA which is thought to be transferred to the NXF1-NXT1 heterodimer for export (TAP/NXF1 pathway); enhances NXF1-NXT1 RNA-binding activity. RNA-binding is semi-sequence specific. The chain is Serine/arginine-rich splicing factor 7 (SRSF7) from Bos taurus (Bovine).